We begin with the raw amino-acid sequence, 447 residues long: Cobyrinate a,c-diamide synthase (447 aa).

The GATase cobBQ-type domain occupies 252–439 (KIAVAFDESF…AHQHCIGNPY (188 aa)). The active-site Nucleophile is the cysteine 331.

The protein belongs to the CobB/CbiA family. Requires Mg(2+) as cofactor.

It catalyses the reaction cob(II)yrinate + 2 L-glutamine + 2 ATP + 2 H2O = cob(II)yrinate a,c diamide + 2 L-glutamate + 2 ADP + 2 phosphate + 2 H(+). The catalysed reaction is Ni-sirohydrochlorin + 2 L-glutamine + 2 ATP + 2 H2O = Ni-sirohydrochlorin a,c-diamide + 2 L-glutamate + 2 ADP + 2 phosphate + 2 H(+). It functions in the pathway cofactor biosynthesis; adenosylcobalamin biosynthesis; cob(II)yrinate a,c-diamide from sirohydrochlorin (anaerobic route): step 10/10. In terms of biological role, catalyzes the ATP-dependent amidation of the two carboxylate groups at positions a and c of cobyrinate, using either L-glutamine or ammonia as the nitrogen source. Involved in the biosynthesis of the unique nickel-containing tetrapyrrole coenzyme F430, the prosthetic group of methyl-coenzyme M reductase (MCR), which plays a key role in methanogenesis and anaerobic methane oxidation. Catalyzes the ATP-dependent amidation of the two carboxylate groups at positions a and c of Ni-sirohydrochlorin, using L-glutamine or ammonia as the nitrogen source. This is Cobyrinate a,c-diamide synthase from Methanococcus maripaludis (strain C7 / ATCC BAA-1331).